A 797-amino-acid chain; its full sequence is Ribosome biogenesis protein BOP1 homolog (797 aa).

Disordered stretches follow at residues 22–112 (LVPS…GGGP) and 149–177 (SICANTKPRAGPDPGSDSSEDERPNRNTV). The span at 61–73 (AGAAAAAVEGTAA) shows a compositional bias: low complexity. Positions 74–87 (PEDEAADNSSEEDA) are enriched in acidic residues. Positions 90–112 (GSHGEGAGEGGGSGTWPGNGGGP) are enriched in gly residues. 7 WD repeats span residues 462–502 (GHMG…CWRT), 504–544 (VLEG…EEAE), 581–623 (RLRF…SQNP), 626–664 (KNRGRVVRVAFHPTKPFFFVATQNHVRVYNLAKQALAKK), 667–706 (GGGGVLSCLALHPGGDHVLVGSDDKRVAWYDLDLSTKPYK), 710–749 (YHSAPPRAVAFHRSYPLFASAADDGTVQVFHGMVYADLLT), and 766–797 (TASEGVADCAFHPTQPWIFTAGADSKILLYCN).

The protein belongs to the WD repeat BOP1/ERB1 family.

The protein localises to the nucleus. It localises to the nucleolus. It is found in the nucleoplasm. Required for maturation of ribosomal RNAs and formation of the large ribosomal subunit. The protein is Ribosome biogenesis protein BOP1 homolog of Chlamydomonas reinhardtii (Chlamydomonas smithii).